The chain runs to 390 residues: 2-oxoisovalerate dehydrogenase subunit beta, mitochondrial (390 aa).

Residues 1–48 constitute a mitochondrion transit peptide; it reads MAAVAARAGGLLRLGAAGAERRRRGLRCAALVQGFLQPAVDDASQKRR. Tyr150 contributes to the thiamine diphosphate binding site. Gly176, Leu178, Thr179, Cys226, and Asp229 together coordinate K(+). Lys230 is modified (N6-acetyllysine). Position 231 (Asn231) interacts with K(+). Lys239 carries the N6-acetyllysine modification.

Heterotetramer of 2 alpha/BCKDHA and 2 beta chains/BCKDHB that forms the branched-chain alpha-keto acid decarboxylase (E1) component of the BCKD complex. The branched-chain alpha-ketoacid dehydrogenase is a large complex composed of three major building blocks E1, E2 and E3. It is organized around E2, a 24-meric cubic core composed of DBT, to which are associated 6 to 12 copies of E1, and approximately 6 copies of the dehydrogenase E3, a DLD dimer. Requires thiamine diphosphate as cofactor.

The protein resides in the mitochondrion matrix. The enzyme catalyses N(6)-[(R)-lipoyl]-L-lysyl-[protein] + 3-methyl-2-oxobutanoate + H(+) = N(6)-[(R)-S(8)-2-methylpropanoyldihydrolipoyl]-L-lysyl-[protein] + CO2. Its function is as follows. Together with BCKDHA forms the heterotetrameric E1 subunit of the mitochondrial branched-chain alpha-ketoacid dehydrogenase (BCKD) complex. The BCKD complex catalyzes the multi-step oxidative decarboxylation of alpha-ketoacids derived from the branched-chain amino-acids valine, leucine and isoleucine producing CO2 and acyl-CoA which is subsequently utilized to produce energy. The E1 subunit catalyzes the first step with the decarboxylation of the alpha-ketoacid forming an enzyme-product intermediate. A reductive acylation mediated by the lipoylamide cofactor of E2 extracts the acyl group from the E1 active site for the next step of the reaction. The sequence is that of 2-oxoisovalerate dehydrogenase subunit beta, mitochondrial from Rattus norvegicus (Rat).